The following is a 370-amino-acid chain: tRNA-specific 2-thiouridylase MnmA (370 aa).

ATP-binding positions include 14–21 and Met40; that span reads GMSGGVDS. The interaction with target base in tRNA stretch occupies residues 100–102; it reads NPD. The active-site Nucleophile is the Cys105. The cysteines at positions 105 and 205 are disulfide-linked. Position 129 (Gly129) interacts with ATP. The interaction with tRNA stretch occupies residues 155–157; it reads KDQ. Cys205 acts as the Cysteine persulfide intermediate in catalysis. Residues 321–322 are interaction with tRNA; sequence RY.

It belongs to the MnmA/TRMU family.

It is found in the cytoplasm. The catalysed reaction is S-sulfanyl-L-cysteinyl-[protein] + uridine(34) in tRNA + AH2 + ATP = 2-thiouridine(34) in tRNA + L-cysteinyl-[protein] + A + AMP + diphosphate + H(+). Its function is as follows. Catalyzes the 2-thiolation of uridine at the wobble position (U34) of tRNA, leading to the formation of s(2)U34. This chain is tRNA-specific 2-thiouridylase MnmA, found in Bordetella avium (strain 197N).